Reading from the N-terminus, the 340-residue chain is Ornithine carbamoyltransferase (340 aa).

Residues 57-60 (STRT), Gln-84, Arg-108, and 135-138 (HPTQ) each bind carbamoyl phosphate. Residues Asn-167, Asp-231, and 235 to 236 (SM) contribute to the L-ornithine site. Carbamoyl phosphate-binding positions include 272–273 (CL) and Arg-317.

It belongs to the aspartate/ornithine carbamoyltransferase superfamily. OTCase family.

Its subcellular location is the cytoplasm. It catalyses the reaction carbamoyl phosphate + L-ornithine = L-citrulline + phosphate + H(+). Its pathway is amino-acid biosynthesis; L-arginine biosynthesis; L-arginine from L-ornithine and carbamoyl phosphate: step 1/3. Functionally, reversibly catalyzes the transfer of the carbamoyl group from carbamoyl phosphate (CP) to the N(epsilon) atom of ornithine (ORN) to produce L-citrulline. This is Ornithine carbamoyltransferase (argF) from Lactiplantibacillus plantarum (strain ATCC BAA-793 / NCIMB 8826 / WCFS1) (Lactobacillus plantarum).